The primary structure comprises 353 residues: tRNA N6-adenosine threonylcarbamoyltransferase (353 aa).

2 residues coordinate Fe cation: histidine 119 and histidine 123. Substrate-binding positions include 145–149 (LVSGG), aspartate 178, glycine 191, and asparagine 285. Aspartate 313 is a Fe cation binding site.

This sequence belongs to the KAE1 / TsaD family. Fe(2+) serves as cofactor.

The protein localises to the cytoplasm. The enzyme catalyses L-threonylcarbamoyladenylate + adenosine(37) in tRNA = N(6)-L-threonylcarbamoyladenosine(37) in tRNA + AMP + H(+). Required for the formation of a threonylcarbamoyl group on adenosine at position 37 (t(6)A37) in tRNAs that read codons beginning with adenine. Is involved in the transfer of the threonylcarbamoyl moiety of threonylcarbamoyl-AMP (TC-AMP) to the N6 group of A37, together with TsaE and TsaB. TsaD likely plays a direct catalytic role in this reaction. The polypeptide is tRNA N6-adenosine threonylcarbamoyltransferase (Magnetococcus marinus (strain ATCC BAA-1437 / JCM 17883 / MC-1)).